A 571-amino-acid chain; its full sequence is uncharacterized protein (571 aa).

Helical transmembrane passes span 10-29, 36-55, 65-87, 96-118, and 166-188; these read VRLH…HFIG, VSLG…GLLF, WAFF…FASL, ALAV…LFRF, and ATTY…PRLL. An RCK C-terminal domain is found at 294–378; sequence TEVDDQELLS…IATAARNLGF (85 aa). 6 consecutive transmembrane segments (helical) span residues 388-406, 411-433, 446-465, 480-502, 509-531, and 546-568; these read LVYL…LLQV, VPLG…WLYS, LRLL…GLAA, LFAK…GLLL, LPPI…LNAL, and VPFA…CAVA.

Belongs to the AAE transporter (TC 2.A.81) family.

It is found in the cell membrane. This is an uncharacterized protein from Bordetella bronchiseptica (strain ATCC BAA-588 / NCTC 13252 / RB50) (Alcaligenes bronchisepticus).